Reading from the N-terminus, the 408-residue chain is MEGPAFSKPLKDKINPWGPLIILGILIRAGVSVQHDSPHQVFNVTWRVTNLMTGQTANATSLLGTMTDAFPKLYFDLCDLIGDDWDETGLGCRTPGGRKRARTFDFYVCPGHTVPTGCGGPREGYCGKWGCETTGQAYWKPSSSWDLISLKRGNTPRNQGPCYDSSAVSSDIKGATPGGRCNPLVLEFTDAGKKASWDGPKVWGLRLYRSTGTDPVTRFSLTRQVLNIGPRVPIGPNPVITDQLPPSRPVQIMLPRPPQPPPPGAASIVPETAPPSQQPGTGDRLLNLVDGAYQALNLTNPDKTQDCWLCLVSGPPYYEGVAVLGTYYNHTSALKEECCFYADHTGLVRDSMAKLRERLTQRQKLFESSQGWFEELFNRSTWFTTLIFTIIGPLIILLLILLFWTLHS.

The N-terminal stretch at 1–32 is a signal peptide; the sequence is MEGPAFSKPLKDKINPWGPLIILGILIRAGVS. At 33 to 385 the chain is on the virion surface side; sequence VQHDSPHQVF…LFNRSTWFTT (353 aa). Asn43 and Asn58 each carry an N-linked (GlcNAc...) asparagine; by host glycan. The disordered stretch occupies residues 256 to 281; sequence RPPQPPPPGAASIVPETAPPSQQPGT. Residues Asn297 and Asn329 are each glycosylated (N-linked (GlcNAc...) asparagine; by host). The stretch at 335-371 forms a coiled coil; sequence KEECCFYADHTGLVRDSMAKLRERLTQRQKLFESSQG. Asn378 is a glycosylation site (N-linked (GlcNAc...) asparagine; by host). A helical transmembrane segment spans residues 386–406; the sequence is LIFTIIGPLIILLLILLFWTL. Residues 407-408 are Intravirion-facing; that stretch reads HS.

It is found in the host endoplasmic reticulum membrane. It localises to the host cell membrane. Its subcellular location is the virion membrane. In terms of biological role, envelope-like membrane glycoprotein. The chain is Glycoprotein 55 (env) from Mus musculus (Mouse).